Here is a 60-residue protein sequence, read N- to C-terminus: Conotoxin Cal6.30 (60 aa).

The N-terminal stretch at 1–22 is a signal peptide; the sequence is MKVTCVLTLAVLILTIGQIANA. Disulfide bonds link cysteine 31-cysteine 47, cysteine 38-cysteine 51, and cysteine 46-cysteine 55.

Expressed by the venom duct.

Its subcellular location is the secreted. Functionally, probable neurotoxin. In Californiconus californicus (California cone), this protein is Conotoxin Cal6.30.